We begin with the raw amino-acid sequence, 201 residues long: uncharacterized protein (201 aa).

Positions 1–25 (MYRAGVTLLVVAVVSLGRWDVVTMA) are cleaved as a signal peptide. The Extracellular segment spans residues 26 to 170 (AAIGIGWYEP…AYFRRSNHRA (145 aa)). Asn-46, Asn-49, Asn-55, Asn-84, Asn-95, Asn-113, Asn-122, Asn-137, and Asn-144 each carry an N-linked (GlcNAc...) asparagine; by host glycan. The helical transmembrane segment at 171-191 (FMIVILTQVVFVVFIINASFI) threads the bilayer. The Cytoplasmic portion of the chain corresponds to 192–201 (WSWTFRRHKR).

It belongs to the HHV-5 UL120 protein family.

Its subcellular location is the host membrane. This is an uncharacterized protein from Homo sapiens (Human).